The following is a 202-amino-acid chain: ATP-dependent Clp protease proteolytic subunit (202 aa).

Serine 101 acts as the Nucleophile in catalysis. Residue histidine 126 is part of the active site.

Belongs to the peptidase S14 family. As to quaternary structure, component of the chloroplastic Clp protease core complex.

The protein resides in the plastid. The protein localises to the chloroplast stroma. It carries out the reaction Hydrolysis of proteins to small peptides in the presence of ATP and magnesium. alpha-casein is the usual test substrate. In the absence of ATP, only oligopeptides shorter than five residues are hydrolyzed (such as succinyl-Leu-Tyr-|-NHMec, and Leu-Tyr-Leu-|-Tyr-Trp, in which cleavage of the -Tyr-|-Leu- and -Tyr-|-Trp bonds also occurs).. Cleaves peptides in various proteins in a process that requires ATP hydrolysis. Has a chymotrypsin-like activity. Plays a major role in the degradation of misfolded proteins. The polypeptide is ATP-dependent Clp protease proteolytic subunit (Drimys granadensis).